The sequence spans 154 residues: Deoxyuridine 5'-triphosphate nucleotidohydrolase (154 aa).

Residues 70–72 (RSG), Asn83, 87–89 (LID), and Met97 contribute to the substrate site.

It belongs to the dUTPase family. Mg(2+) is required as a cofactor.

The catalysed reaction is dUTP + H2O = dUMP + diphosphate + H(+). The protein operates within pyrimidine metabolism; dUMP biosynthesis; dUMP from dCTP (dUTP route): step 2/2. Its function is as follows. This enzyme is involved in nucleotide metabolism: it produces dUMP, the immediate precursor of thymidine nucleotides and it decreases the intracellular concentration of dUTP so that uracil cannot be incorporated into DNA. The sequence is that of Deoxyuridine 5'-triphosphate nucleotidohydrolase from Buchnera aphidicola subsp. Acyrthosiphon pisum (strain 5A).